Consider the following 261-residue polypeptide: Cytochrome c oxidase subunit 3 (261 aa).

At 1–15 (MTHQTHAYHMVNPSP) the chain is on the mitochondrial matrix side. Residues 16 to 34 (WPLTGAMSALLLTSGLIMW) traverse the membrane as a helical segment. The Mitochondrial intermembrane segment spans residues 35–40 (FHFNSY). The chain crosses the membrane as a helical span at residues 41 to 66 (TLLLLGLLTNLISSYQWWRDIVREGT). The Mitochondrial matrix portion of the chain corresponds to 67-72 (YQGHHT). Residues 73-105 (KIVQKGLRYGMILFIISEVFFFLGFFWAFYHSS) form a helical membrane-spanning segment. At 106–128 (LAPTPELGGCWPPTGISPLNPLE) the chain is on the mitochondrial intermembrane side. A helical membrane pass occupies residues 129 to 152 (VPLLNTSILLASGVSITWAHHSLM). Residues 153–155 (EGN) lie on the Mitochondrial matrix side of the membrane. The helical transmembrane segment at 156–183 (RKQMLQALTITIALGLYFTALQAMEYYE) threads the bilayer. The Mitochondrial intermembrane portion of the chain corresponds to 184-190 (ASFTISD). The chain crosses the membrane as a helical span at residues 191 to 223 (GVYGSTFFVATGFHGLHVIIGTTFLITCLVRQT). At 224–232 (LYHFTSNHH) the chain is on the mitochondrial matrix side. Residues 233 to 256 (FGFEAAAWYWHFVDVVWLFLYVSI) form a helical membrane-spanning segment. Residues 257–261 (YWWGS) are Mitochondrial intermembrane-facing.

This sequence belongs to the cytochrome c oxidase subunit 3 family. As to quaternary structure, component of the cytochrome c oxidase (complex IV, CIV), a multisubunit enzyme composed of 14 subunits. The complex is composed of a catalytic core of 3 subunits MT-CO1, MT-CO2 and MT-CO3, encoded in the mitochondrial DNA, and 11 supernumerary subunits COX4I, COX5A, COX5B, COX6A, COX6B, COX6C, COX7A, COX7B, COX7C, COX8 and NDUFA4, which are encoded in the nuclear genome. The complex exists as a monomer or a dimer and forms supercomplexes (SCs) in the inner mitochondrial membrane with NADH-ubiquinone oxidoreductase (complex I, CI) and ubiquinol-cytochrome c oxidoreductase (cytochrome b-c1 complex, complex III, CIII), resulting in different assemblies (supercomplex SCI(1)III(2)IV(1) and megacomplex MCI(2)III(2)IV(2)).

It localises to the mitochondrion inner membrane. It carries out the reaction 4 Fe(II)-[cytochrome c] + O2 + 8 H(+)(in) = 4 Fe(III)-[cytochrome c] + 2 H2O + 4 H(+)(out). In terms of biological role, component of the cytochrome c oxidase, the last enzyme in the mitochondrial electron transport chain which drives oxidative phosphorylation. The respiratory chain contains 3 multisubunit complexes succinate dehydrogenase (complex II, CII), ubiquinol-cytochrome c oxidoreductase (cytochrome b-c1 complex, complex III, CIII) and cytochrome c oxidase (complex IV, CIV), that cooperate to transfer electrons derived from NADH and succinate to molecular oxygen, creating an electrochemical gradient over the inner membrane that drives transmembrane transport and the ATP synthase. Cytochrome c oxidase is the component of the respiratory chain that catalyzes the reduction of oxygen to water. Electrons originating from reduced cytochrome c in the intermembrane space (IMS) are transferred via the dinuclear copper A center (CU(A)) of subunit 2 and heme A of subunit 1 to the active site in subunit 1, a binuclear center (BNC) formed by heme A3 and copper B (CU(B)). The BNC reduces molecular oxygen to 2 water molecules using 4 electrons from cytochrome c in the IMS and 4 protons from the mitochondrial matrix. This is Cytochrome c oxidase subunit 3 (MT-CO3) from Ornithorhynchus anatinus (Duckbill platypus).